Here is a 261-residue protein sequence, read N- to C-terminus: tRNA pseudouridine synthase A (261 aa).

Residue Asp-51 is the Nucleophile of the active site. Position 109 (Tyr-109) interacts with substrate.

This sequence belongs to the tRNA pseudouridine synthase TruA family. In terms of assembly, homodimer.

It catalyses the reaction uridine(38/39/40) in tRNA = pseudouridine(38/39/40) in tRNA. Formation of pseudouridine at positions 38, 39 and 40 in the anticodon stem and loop of transfer RNAs. The protein is tRNA pseudouridine synthase A of Shewanella amazonensis (strain ATCC BAA-1098 / SB2B).